The sequence spans 279 residues: Putative pyruvate, phosphate dikinase regulatory protein (279 aa).

152 to 159 (GVSRTSKS) contributes to the ADP binding site.

Belongs to the pyruvate, phosphate/water dikinase regulatory protein family. PDRP subfamily.

The enzyme catalyses N(tele)-phospho-L-histidyl/L-threonyl-[pyruvate, phosphate dikinase] + ADP = N(tele)-phospho-L-histidyl/O-phospho-L-threonyl-[pyruvate, phosphate dikinase] + AMP + H(+). It catalyses the reaction N(tele)-phospho-L-histidyl/O-phospho-L-threonyl-[pyruvate, phosphate dikinase] + phosphate + H(+) = N(tele)-phospho-L-histidyl/L-threonyl-[pyruvate, phosphate dikinase] + diphosphate. Bifunctional serine/threonine kinase and phosphorylase involved in the regulation of the pyruvate, phosphate dikinase (PPDK) by catalyzing its phosphorylation/dephosphorylation. The protein is Putative pyruvate, phosphate dikinase regulatory protein of Anaplasma marginale (strain Florida).